Reading from the N-terminus, the 139-residue chain is ATP synthase epsilon chain (139 aa).

It belongs to the ATPase epsilon chain family. In terms of assembly, F-type ATPases have 2 components, CF(1) - the catalytic core - and CF(0) - the membrane proton channel. CF(1) has five subunits: alpha(3), beta(3), gamma(1), delta(1), epsilon(1). CF(0) has three main subunits: a, b and c.

The protein localises to the cell inner membrane. In terms of biological role, produces ATP from ADP in the presence of a proton gradient across the membrane. This is ATP synthase epsilon chain from Acinetobacter baumannii (strain SDF).